A 217-amino-acid chain; its full sequence is GTP cyclohydrolase 1 (217 aa).

Zn(2+) contacts are provided by Cys-109, His-112, and Cys-180.

This sequence belongs to the GTP cyclohydrolase I family. Toroid-shaped homodecamer, composed of two pentamers of five dimers.

It catalyses the reaction GTP + H2O = 7,8-dihydroneopterin 3'-triphosphate + formate + H(+). It functions in the pathway cofactor biosynthesis; 7,8-dihydroneopterin triphosphate biosynthesis; 7,8-dihydroneopterin triphosphate from GTP: step 1/1. The sequence is that of GTP cyclohydrolase 1 from Vibrio cholerae serotype O1 (strain ATCC 39315 / El Tor Inaba N16961).